We begin with the raw amino-acid sequence, 378 residues long: Interleukin-3 receptor subunit alpha (378 aa).

The N-terminal stretch at 1–18 is a signal peptide; sequence MVLLWLTLLLIALPCLLQ. At 19 to 305 the chain is on the extracellular side; that stretch reads TKEDPNPPIT…EEGANTRAWR (287 aa). N-linked (GlcNAc...) asparagine glycans are attached at residues N46, N64, N80, and N109. Intrachain disulfides connect C52/C68, C76/C195, C112/C122, and C151/C165. N-linked (GlcNAc...) asparagine glycans are attached at residues N212 and N218. Cysteines 217 and 293 form a disulfide. The short motif at 282–286 is the WSXWS motif element; that stretch reads LSAWS. Residues 306-325 form a helical membrane-spanning segment; the sequence is TSLLIALGTLLALVCVFVIC. Residues 326 to 378 lie on the Cytoplasmic side of the membrane; the sequence is RRYLVMQRLFPRIPHMKDPIGDSFQNDKLVVWEAGKAGLEECLVTEVQVVQKT. The Box 1 motif motif lies at 334-342; it reads LFPRIPHMK.

The protein belongs to the type I cytokine receptor family. Type 5 subfamily. As to quaternary structure, interacts with IL3. Heterodimer of an alpha and a beta subunit. The beta subunit is common to the IL3, IL5 and GM-CSF receptors. Post-translationally, ubiquitinated by RNFT2 in response to IL3. Ubiquitination leads ligand-induced degradation by the proteasome. Ubiquitinated by RNF128 via 'Lys-27'-linked polyubiquitination, facilitating its degradation through the lysosomal pathway.

The protein resides in the cell membrane. In terms of biological role, cell surface receptor for IL3 expressed on hematopoietic progenitor cells, monocytes and B-lymphocytes that controls the production and differentiation of hematopoietic progenitor cells into lineage-restricted cells. Ligand stimulation rapidly induces hetrodimerization with IL3RB, phosphorylation and enzyme activity of effector proteins such as JAK2 and PI3K that play a role in signaling cell proliferation and differentiation. Activation of JAK2 leads to STAT5-mediated transcriptional program. The polypeptide is Interleukin-3 receptor subunit alpha (Homo sapiens (Human)).